A 124-amino-acid chain; its full sequence is MTAYGHMPGEAIECLSIAVELHKQEVIDAHGQVTIRVGFKIGGGIDQDPTKAPFKYPDSGVYITNVESGSPADVAGLRKHDKILQVNGADFTMMTHDRAVKFIKQSKVLHMLVARADLPPVSLH.

The 89-residue stretch at 18–106 folds into the PDZ domain; sequence AVELHKQEVI…DRAVKFIKQS (89 aa).

May regulate a number of protein-protein interactions by competing for PDZ domain binding sites. This chain is Tax1-binding protein 3 homolog, found in Caenorhabditis elegans.